Consider the following 345-residue polypeptide: S-adenosylmethionine:tRNA ribosyltransferase-isomerase (345 aa).

This sequence belongs to the QueA family. As to quaternary structure, monomer.

It localises to the cytoplasm. It carries out the reaction 7-aminomethyl-7-carbaguanosine(34) in tRNA + S-adenosyl-L-methionine = epoxyqueuosine(34) in tRNA + adenine + L-methionine + 2 H(+). Its pathway is tRNA modification; tRNA-queuosine biosynthesis. Transfers and isomerizes the ribose moiety from AdoMet to the 7-aminomethyl group of 7-deazaguanine (preQ1-tRNA) to give epoxyqueuosine (oQ-tRNA). This chain is S-adenosylmethionine:tRNA ribosyltransferase-isomerase, found in Shewanella sp. (strain MR-7).